The following is a 1183-amino-acid chain: 3-hydroxy-3-methylglutaryl-coenzyme A reductase (1183 aa).

Residues 1-245 lie on the Cytoplasmic side of the membrane; it reads MAAILLPQRF…DLLKNAETLD (245 aa). Residues 245–426 enclose the SSD domain; the sequence is DIVIMLLGYI…FTFYTAILSI (182 aa). The helical transmembrane segment at 246 to 266 threads the bilayer; that stretch reads IVIMLLGYIAMHLTFVSLFLS. At 267–273 the chain is on the lumenal side; the sequence is MRKMGSK. The chain crosses the membrane as a helical span at residues 274–294; that stretch reads FWLGICTLFSSVFAFLFGLVV. At 295–299 the chain is on the cytoplasmic side; it reads TTKLG. Residues 300–320 form a helical membrane-spanning segment; sequence VPISVILLSEGLPFLVVTIGF. The Lumenal portion of the chain corresponds to 321 to 378; sequence EKNIVLTRAVMSHAIEHRRIQAQNSKSGKRSPERSTQNMIQYAVQAAIKEKGFEIIRD. The helical transmembrane segment at 379–399 threads the bilayer; sequence YAIEIVILVIGAASGVQGGLQ. The Cytoplasmic segment spans residues 400-402; the sequence is QFC. Residues 403 to 423 traverse the membrane as a helical segment; that stretch reads FLAAWTLFFDFILLFTFYTAI. The Lumenal segment spans residues 424 to 482; it reads LSIKLEINRIKRHVDMRMALEDDGVSRRVAENVAKGDDELNRVRGDAPLFGRKSSSIPK. Residues 483-503 traverse the membrane as a helical segment; sequence FKVLMILGFIFVNIVNICSIP. At 504–1183 the chain is on the cytoplasmic side; the sequence is FRNPSSMSTI…SAAAIQRSKR (680 aa). The Charge relay system role is filled by E828. A CoA-binding site is contributed by 834 to 840; that stretch reads SASRGCK. NADP(+) is bound by residues 895–897 and 922–930; these read SRF and DAMGMNMIS. Catalysis depends on K962, which acts as the Charge relay system. Residue 991 to 993 coordinates CoA; sequence VLK. The Charge relay system role is filled by D1038. 1133–1134 is a binding site for CoA; the sequence is AH. H1134 (proton donor) is an active-site residue. Positions 1136-1183 are disordered; that stretch reads QHNRSAAPSRSTTPAPPMTPVSLAMTSAQERSASTTSMSAAAIQRSKR. 1138–1139 contacts NADP(+); the sequence is NR. Composition is skewed to low complexity over residues 1139 to 1148 and 1167 to 1177; these read RSAAPSRSTT and SASTTSMSAAA.

This sequence belongs to the HMG-CoA reductase family.

Its subcellular location is the endoplasmic reticulum membrane. It catalyses the reaction (R)-mevalonate + 2 NADP(+) + CoA = (3S)-3-hydroxy-3-methylglutaryl-CoA + 2 NADPH + 2 H(+). It functions in the pathway metabolic intermediate biosynthesis; (R)-mevalonate biosynthesis; (R)-mevalonate from acetyl-CoA: step 3/3. In terms of biological role, HMG-CoA reductase; part of the first module of ergosterol biosynthesis pathway that includes the early steps of the pathway, conserved across all eukaryotes, and which results in the formation of mevalonate from acetyl-coenzyme A (acetyl-CoA). In this module, the cytosolic acetyl-CoA acetyltransferase catalyzes the formation of acetoacetyl-CoA. The hydroxymethylglutaryl-CoA synthase then condenses acetyl-CoA with acetoacetyl-CoA to form HMG-CoA. The rate-limiting step of the early module is the reduction to mevalonate by the 3-hydroxy-3-methylglutaryl-coenzyme A (HMG-CoA) reductase HMGR. The polypeptide is 3-hydroxy-3-methylglutaryl-coenzyme A reductase (HMGR) (Gibberella fujikuroi (strain CBS 195.34 / IMI 58289 / NRRL A-6831) (Bakanae and foot rot disease fungus)).